We begin with the raw amino-acid sequence, 172 residues long: PRELI domain containing protein 3A (172 aa).

Positions 1 to 172 (MKIWSSEHVF…IIEHSESAVS (172 aa)) constitute a PRELI/MSF1 domain.

This sequence belongs to the slowmo family. Interacts with TRIAP1.

It localises to the mitochondrion. In vitro, the TRIAP1:PRELID3A complex mediates the transfer of phosphatidic acid (PA) between liposomes and probably functions as a PA transporter across the mitochondrion intermembrane space. Phosphatidic acid import is required for cardiolipin (CL) synthesis in the mitochondrial inner membrane. In Homo sapiens (Human), this protein is PRELI domain containing protein 3A (PRELID3A).